A 492-amino-acid chain; its full sequence is Tyrosinase-like protein 1 (492 aa).

The first 22 residues, 1 to 22 (MDKMRTLQSLIVKLTLLYGALC), serve as a signal peptide directing secretion. Cu cation contacts are provided by histidine 147, histidine 155, histidine 164, histidine 289, histidine 293, and histidine 316. Residues 472-492 (SEPPLQLEGPSFTSSFDDPRI) form a disordered region. The span at 482 to 492 (SFTSSFDDPRI) shows a compositional bias: polar residues.

Requires Cu(2+) as cofactor. As to expression, prismatic layer of shell (at protein level). Expressed primarily in the mantle with highest level in the mantle edge and lower level in the mantle pallium.

The protein localises to the secreted. This Margaritifera margaritifera (Freshwater pearl mussel) protein is Tyrosinase-like protein 1.